The following is a 258-amino-acid chain: Venom plasminogen activator Haly-PA (258 aa).

An N-terminal signal peptide occupies residues 1 to 18 (MALIRVLANLLILQLSYA). Residues 19-24 (QKSSEL) constitute a propeptide that is removed on maturation. A Peptidase S1 domain is found at 25 to 249 (VVGGDECNIN…HLDWIKSIIA (225 aa)). 6 disulfides stabilise this stretch: Cys31-Cys163, Cys50-Cys66, Cys98-Cys256, Cys142-Cys210, Cys174-Cys189, and Cys200-Cys225. Residue Asn44 is glycosylated (N-linked (GlcNAc...) asparagine). Residues His65 and Asp110 each act as charge relay system in the active site. The Charge relay system role is filled by Ser204.

The protein belongs to the peptidase S1 family. Snake venom subfamily. Monomer. In terms of processing, glycosylated. In terms of tissue distribution, expressed by the venom gland.

It is found in the secreted. Its function is as follows. Snake venom serine protease that activates plasminogen. Displays indirect fibrino(geno)lytic activity through conversion of plasminogen to plasmin. Shows a preferential cleavage at Arg-|-Xaa instead of Lys-|-Xaa bonds. This Gloydius brevicauda (Korean slamosa snake) protein is Venom plasminogen activator Haly-PA.